The chain runs to 147 residues: 3-dehydroquinate dehydratase (147 aa).

Y24 serves as the catalytic Proton acceptor. Substrate is bound by residues N75, H81, and D88. H101 serves as the catalytic Proton donor. Substrate-binding positions include 102–103 and R112; that span reads LS.

Belongs to the type-II 3-dehydroquinase family. Homododecamer.

The catalysed reaction is 3-dehydroquinate = 3-dehydroshikimate + H2O. It participates in metabolic intermediate biosynthesis; chorismate biosynthesis; chorismate from D-erythrose 4-phosphate and phosphoenolpyruvate: step 3/7. In terms of biological role, catalyzes a trans-dehydration via an enolate intermediate. In Caulobacter sp. (strain K31), this protein is 3-dehydroquinate dehydratase.